We begin with the raw amino-acid sequence, 338 residues long: UDP-N-acetylenolpyruvoylglucosamine reductase (338 aa).

Residues 17 to 188 enclose the FAD-binding PCMH-type domain; the sequence is IAARTDWWID…MYVDYRLRLK (172 aa). Arginine 164 is a catalytic residue. Serine 237 serves as the catalytic Proton donor. Glutamate 333 is an active-site residue.

This sequence belongs to the MurB family. FAD is required as a cofactor.

Its subcellular location is the cytoplasm. The catalysed reaction is UDP-N-acetyl-alpha-D-muramate + NADP(+) = UDP-N-acetyl-3-O-(1-carboxyvinyl)-alpha-D-glucosamine + NADPH + H(+). It participates in cell wall biogenesis; peptidoglycan biosynthesis. Functionally, cell wall formation. The sequence is that of UDP-N-acetylenolpyruvoylglucosamine reductase from Porphyromonas gingivalis (strain ATCC BAA-308 / W83).